A 164-amino-acid polypeptide reads, in one-letter code: CASP-like protein 1C1 (164 aa).

Topologically, residues 1–7 are cytoplasmic; the sequence is MVKLTKR. A helical transmembrane segment spans residues 8 to 28; it reads IGGLVLRLAAFGAALAALIVM. At 29–51 the chain is on the extracellular side; sequence ITSRERASFLAISLEAKYTDMAA. A helical transmembrane segment spans residues 52-72; it reads FKYFVIANAVVSVYSFLVLFL. Residues 73–80 are Cytoplasmic-facing; the sequence is PKESLLWK. The helical transmembrane segment at 81-101 threads the bilayer; that stretch reads FVVVLDLVMTMLLTSSLSAAL. Residues 102–129 are Extracellular-facing; that stretch reads AVAQVGKKGNANAGWLPICGQVPKFCDQ. A helical transmembrane segment spans residues 130–150; it reads ITGALIAGFVALVLYVLLLLY. Over 151–164 the chain is Cytoplasmic; the sequence is SLHAVVDPFLLQKS.

It belongs to the Casparian strip membrane proteins (CASP) family. In terms of assembly, homodimer and heterodimers. As to expression, expressed in the stele of the root.

It is found in the cell membrane. The polypeptide is CASP-like protein 1C1 (Arabidopsis thaliana (Mouse-ear cress)).